The following is a 347-amino-acid chain: Lipoyl synthase (347 aa).

[4Fe-4S] cluster is bound by residues Cys77, Cys82, Cys88, Cys103, Cys107, Cys110, and Ser317. A Radical SAM core domain is found at 89-306; sequence FADGTATFMI…MDYGKKIGFF (218 aa).

The protein belongs to the radical SAM superfamily. Lipoyl synthase family. It depends on [4Fe-4S] cluster as a cofactor.

The protein localises to the cytoplasm. It catalyses the reaction [[Fe-S] cluster scaffold protein carrying a second [4Fe-4S](2+) cluster] + N(6)-octanoyl-L-lysyl-[protein] + 2 oxidized [2Fe-2S]-[ferredoxin] + 2 S-adenosyl-L-methionine + 4 H(+) = [[Fe-S] cluster scaffold protein] + N(6)-[(R)-dihydrolipoyl]-L-lysyl-[protein] + 4 Fe(3+) + 2 hydrogen sulfide + 2 5'-deoxyadenosine + 2 L-methionine + 2 reduced [2Fe-2S]-[ferredoxin]. The protein operates within protein modification; protein lipoylation via endogenous pathway; protein N(6)-(lipoyl)lysine from octanoyl-[acyl-carrier-protein]: step 2/2. Its function is as follows. Catalyzes the radical-mediated insertion of two sulfur atoms into the C-6 and C-8 positions of the octanoyl moiety bound to the lipoyl domains of lipoate-dependent enzymes, thereby converting the octanoylated domains into lipoylated derivatives. In Psychrobacter arcticus (strain DSM 17307 / VKM B-2377 / 273-4), this protein is Lipoyl synthase.